The primary structure comprises 709 residues: MLNPTVRKFQYGQHTVTLETGMMARQATAAVMVDMDGTAVFVTVVAKKKVKEGQDFFPLTVNYQERSYAAGRIPGSFFRREGRPGEGETLIARLIDRPLRPLFPEGFLNEIQVVATVVSVNPQVNPDIVAMIGASAALSLSGVPFNGPIGGARVGFIDGQYVLNPTVDELKISKLDLVVAGTAGAVLMVESEADLLSEEQMLGAVVFGHEQQQVVIENINALVAEVGKEKWDWAPEPINQSLHDRIAQLAQTRIGDAYRITEKQERYEQIDAIRDEVISTLLAEDESLDEGEIIEIFSGLEKKIVRARVLAGEPRIDGREKDMVRALDIRTGLLPRTHGSALFTRGETQALVTATLGTARDAQTIDDIMGEHTDTFLLHYNFPPYSVGETGMMGSPKRREIGHGRLAKRGVLAVMPTIEEFPYTVRVVSEITESNGSSSMASVCGASLALMDAGVPIKESVAGIAMGLVKEGENFVVLSDILGDEDHLGDMDFKVAGSRNGVSALQMDIKIEGITREIMQVALNQAKSARLHILGVMESAISQPRAEISEFAPRIHTIKINADKIKDVIGKGGSVIRALTEETGTTIEIEDDGTVKIAATSGEQAKQAIARIEEITAEVEVGRIYNGKVTRIVDFGAFVAIGGGKEGLVHISQIADKRVEKVSDYLTMGQEVPVKVLEIDRQGRIRLSMKEAQATQQEAAETSSEDPAN.

Mg(2+) is bound by residues Asp486 and Asp492. The KH domain maps to 553-612; that stretch reads PRIHTIKINADKIKDVIGKGGSVIRALTEETGTTIEIEDDGTVKIAATSGEQAKQAIARI. The 69-residue stretch at 622 to 690 folds into the S1 motif domain; sequence GRIYNGKVTR…RQGRIRLSMK (69 aa). The tract at residues 690–709 is disordered; that stretch reads KEAQATQQEAAETSSEDPAN. Low complexity predominate over residues 691–702; sequence EAQATQQEAAET.

The protein belongs to the polyribonucleotide nucleotidyltransferase family. In terms of assembly, component of the RNA degradosome, which is a multiprotein complex involved in RNA processing and mRNA degradation. It depends on Mg(2+) as a cofactor.

Its subcellular location is the cytoplasm. The enzyme catalyses RNA(n+1) + phosphate = RNA(n) + a ribonucleoside 5'-diphosphate. Its function is as follows. Involved in mRNA degradation. Catalyzes the phosphorolysis of single-stranded polyribonucleotides processively in the 3'- to 5'-direction. This chain is Polyribonucleotide nucleotidyltransferase, found in Proteus mirabilis (strain HI4320).